The primary structure comprises 533 residues: Phosphoenolpyruvate carboxykinase (ATP) (533 aa).

Residues arginine 59, tyrosine 199, and lysine 205 each coordinate substrate. ATP-binding positions include lysine 205, histidine 224, and 240–248; that span reads GLSGTGKTT. Mn(2+)-binding residues include lysine 205 and histidine 224. Aspartate 261 lines the Mn(2+) pocket. ATP-binding positions include glutamate 289, arginine 325, 441-442, and threonine 447; that span reads RI. Substrate is bound at residue arginine 325.

The protein belongs to the phosphoenolpyruvate carboxykinase (ATP) family. As to quaternary structure, monomer. Mn(2+) is required as a cofactor.

It is found in the cytoplasm. The enzyme catalyses oxaloacetate + ATP = phosphoenolpyruvate + ADP + CO2. It functions in the pathway carbohydrate biosynthesis; gluconeogenesis. In terms of biological role, involved in the gluconeogenesis. Catalyzes the conversion of oxaloacetate (OAA) to phosphoenolpyruvate (PEP) through direct phosphoryl transfer between the nucleoside triphosphate and OAA. The chain is Phosphoenolpyruvate carboxykinase (ATP) from Idiomarina loihiensis (strain ATCC BAA-735 / DSM 15497 / L2-TR).